The sequence spans 369 residues: DNA polymerase IV 2 (369 aa).

One can recognise a UmuC domain in the interval 17 to 201 (VFHVDMDSFF…LPVSRIPGVG (185 aa)). Aspartate 21 and aspartate 119 together coordinate Mg(2+). Glutamate 120 is a catalytic residue.

It belongs to the DNA polymerase type-Y family. As to quaternary structure, monomer. It depends on Mg(2+) as a cofactor.

It is found in the cytoplasm. The enzyme catalyses DNA(n) + a 2'-deoxyribonucleoside 5'-triphosphate = DNA(n+1) + diphosphate. Functionally, poorly processive, error-prone DNA polymerase involved in untargeted mutagenesis. Copies undamaged DNA at stalled replication forks, which arise in vivo from mismatched or misaligned primer ends. These misaligned primers can be extended by PolIV. Exhibits no 3'-5' exonuclease (proofreading) activity. May be involved in translesional synthesis. This chain is DNA polymerase IV 2 (dbh2), found in Methanosarcina mazei (strain ATCC BAA-159 / DSM 3647 / Goe1 / Go1 / JCM 11833 / OCM 88) (Methanosarcina frisia).